Reading from the N-terminus, the 347-residue chain is Histidinol-phosphate aminotransferase (347 aa).

Lys209 carries the post-translational modification N6-(pyridoxal phosphate)lysine.

The protein belongs to the class-II pyridoxal-phosphate-dependent aminotransferase family. Histidinol-phosphate aminotransferase subfamily. As to quaternary structure, homodimer. The cofactor is pyridoxal 5'-phosphate.

It carries out the reaction L-histidinol phosphate + 2-oxoglutarate = 3-(imidazol-4-yl)-2-oxopropyl phosphate + L-glutamate. It participates in amino-acid biosynthesis; L-histidine biosynthesis; L-histidine from 5-phospho-alpha-D-ribose 1-diphosphate: step 7/9. The polypeptide is Histidinol-phosphate aminotransferase (Geotalea uraniireducens (strain Rf4) (Geobacter uraniireducens)).